Here is a 615-residue protein sequence, read N- to C-terminus: DNA mismatch repair protein MutL (615 aa).

A disordered region spans residues 362-397 (HFAEPAVREPVAPRYSPAPASGSRPAAPWPNAQPGY). Over residues 373–387 (APRYSPAPASGSRPA) the composition is skewed to low complexity.

It belongs to the DNA mismatch repair MutL/HexB family.

Its function is as follows. This protein is involved in the repair of mismatches in DNA. It is required for dam-dependent methyl-directed DNA mismatch repair. May act as a 'molecular matchmaker', a protein that promotes the formation of a stable complex between two or more DNA-binding proteins in an ATP-dependent manner without itself being part of a final effector complex. The protein is DNA mismatch repair protein MutL of Escherichia coli O81 (strain ED1a).